Here is a 661-residue protein sequence, read N- to C-terminus: UvrABC system protein C (661 aa).

The 80-residue stretch at 25–104 (AEPGCYLMRD…IKNHQPHFNV (80 aa)) folds into the GIY-YIG domain. Residues 214-249 (DELQHLLQEQMERYAERMDYESAARVRDQLQGLDQL) enclose the UVR domain. Basic and acidic residues predominate over residues 636-652 (FFHPSDEGTDADARAAL). Residues 636-661 (FFHPSDEGTDADARAALEEQPQELSA) form a disordered region.

This sequence belongs to the UvrC family. In terms of assembly, interacts with UvrB in an incision complex.

It localises to the cytoplasm. In terms of biological role, the UvrABC repair system catalyzes the recognition and processing of DNA lesions. UvrC both incises the 5' and 3' sides of the lesion. The N-terminal half is responsible for the 3' incision and the C-terminal half is responsible for the 5' incision. The polypeptide is UvrABC system protein C (Synechococcus sp. (strain CC9605)).